A 316-amino-acid polypeptide reads, in one-letter code: Ribosomal protein L11 methyltransferase (316 aa).

S-adenosyl-L-methionine contacts are provided by T157, G178, D200, and N243.

The protein belongs to the methyltransferase superfamily. PrmA family.

It localises to the cytoplasm. The enzyme catalyses L-lysyl-[protein] + 3 S-adenosyl-L-methionine = N(6),N(6),N(6)-trimethyl-L-lysyl-[protein] + 3 S-adenosyl-L-homocysteine + 3 H(+). Its function is as follows. Methylates ribosomal protein L11. The sequence is that of Ribosomal protein L11 methyltransferase from Streptococcus pneumoniae (strain Hungary19A-6).